A 299-amino-acid chain; its full sequence is HTH-type transcriptional regulator ArgP (299 aa).

The region spanning F2–T58 is the HTH lysR-type domain. Positions F19–K38 form a DNA-binding region, H-T-H motif.

This sequence belongs to the LysR transcriptional regulatory family. As to quaternary structure, homodimer.

Functionally, controls the transcription of genes involved in arginine and lysine metabolism. The protein is HTH-type transcriptional regulator ArgP of Pseudomonas fluorescens (strain ATCC BAA-477 / NRRL B-23932 / Pf-5).